Reading from the N-terminus, the 439-residue chain is IAA-amino acid hydrolase ILR1-like 2 (439 aa).

The signal sequence occupies residues methionine 1–serine 21. The Mn(2+) site is built by cysteine 137, histidine 139, glutamate 173, histidine 197, and histidine 397. The Prevents secretion from ER signature appears at histidine 436–leucine 439.

It belongs to the peptidase M20 family. As to quaternary structure, monomer. It depends on Mn(2+) as a cofactor. As to expression, expressed in leaves, stems, siliques, seeds and flowers. Detected in the distal tips of cotyledons and seedling leaves, hydathodes of leaves from mature plants, pollen, ovules and developing seeds.

It is found in the endoplasmic reticulum lumen. Hydrolyzes certain amino acid conjugates of the plant growth regulator indole-3-acetic acid (IAA), including IAA-Ala, IAA-Leu, IAA-Met, IAA-Phe, IAA-Ser, IAA-Thr, IAA-Tyr and IAA-Val. Is the most efficient enzyme of the ILL family for IAA-Ala. Not important for IAA-Leu hydrolysis in roots. May act with ILR1 to provide free IAA to germinating seedlings. The chain is IAA-amino acid hydrolase ILR1-like 2 from Arabidopsis thaliana (Mouse-ear cress).